Here is a 281-residue protein sequence, read N- to C-terminus: Ribosomal RNA small subunit methyltransferase A (281 aa).

S-adenosyl-L-methionine contacts are provided by histidine 25, leucine 27, glycine 52, glutamate 74, aspartate 100, and asparagine 119.

It belongs to the class I-like SAM-binding methyltransferase superfamily. rRNA adenine N(6)-methyltransferase family. RsmA subfamily.

Its subcellular location is the cytoplasm. It catalyses the reaction adenosine(1518)/adenosine(1519) in 16S rRNA + 4 S-adenosyl-L-methionine = N(6)-dimethyladenosine(1518)/N(6)-dimethyladenosine(1519) in 16S rRNA + 4 S-adenosyl-L-homocysteine + 4 H(+). In terms of biological role, specifically dimethylates two adjacent adenosines (A1518 and A1519) in the loop of a conserved hairpin near the 3'-end of 16S rRNA in the 30S particle. May play a critical role in biogenesis of 30S subunits. The sequence is that of Ribosomal RNA small subunit methyltransferase A from Paramagnetospirillum magneticum (strain ATCC 700264 / AMB-1) (Magnetospirillum magneticum).